Reading from the N-terminus, the 429-residue chain is Adenylosuccinate synthetase (429 aa).

GTP-binding positions include Gly12 to Lys18 and Gly40 to Thr42. The active-site Proton acceptor is the Asp13. Mg(2+) is bound by residues Asp13 and Gly40. IMP contacts are provided by residues Asp13–Lys16, Asn38–His41, Thr128, Arg142, Gln223, Thr238, and Arg302. The Proton donor role is filled by His41. Val298–Arg304 is a substrate binding site. Residues Arg304, Lys330–Asp332, and Gly412–Gly414 contribute to the GTP site.

Belongs to the adenylosuccinate synthetase family. Homodimer. Mg(2+) serves as cofactor.

The protein localises to the cytoplasm. It catalyses the reaction IMP + L-aspartate + GTP = N(6)-(1,2-dicarboxyethyl)-AMP + GDP + phosphate + 2 H(+). It functions in the pathway purine metabolism; AMP biosynthesis via de novo pathway; AMP from IMP: step 1/2. In terms of biological role, plays an important role in the de novo pathway of purine nucleotide biosynthesis. Catalyzes the first committed step in the biosynthesis of AMP from IMP. In Pseudarthrobacter chlorophenolicus (strain ATCC 700700 / DSM 12829 / CIP 107037 / JCM 12360 / KCTC 9906 / NCIMB 13794 / A6) (Arthrobacter chlorophenolicus), this protein is Adenylosuccinate synthetase.